We begin with the raw amino-acid sequence, 339 residues long: Very-long-chain 3-oxoacyl-CoA reductase (339 aa).

Residues 19-39 (VALFLLSIGGLFTACKLFSFC) form a helical membrane-spanning segment. L64, K105, D119, D127, N146, Y213, K217, V246, and S248 together coordinate NADP(+). Catalysis depends on Y213, which acts as the Proton donor. K217 functions as the Lowers pKa of active site Tyr in the catalytic mechanism.

Belongs to the short-chain dehydrogenases/reductases (SDR) family.

Its subcellular location is the endoplasmic reticulum membrane. The enzyme catalyses a very-long-chain (3R)-3-hydroxyacyl-CoA + NADP(+) = a very-long-chain 3-oxoacyl-CoA + NADPH + H(+). Its pathway is lipid metabolism; fatty acid biosynthesis. Component of the microsomal membrane bound fatty acid elongation system, which produces the 26-carbon very long-chain fatty acids (VLCFA) from palmitate. Catalyzes the reduction of the 3-ketoacyl-CoA intermediate that is formed in each cycle of fatty acid elongation. VLCFAs serve as precursors for ceramide and sphingolipids. This Ajellomyces capsulatus (strain NAm1 / WU24) (Darling's disease fungus) protein is Very-long-chain 3-oxoacyl-CoA reductase.